A 437-amino-acid chain; its full sequence is tRNA(Ile2) 2-agmatinylcytidine synthetase TiaS (437 aa).

The protein belongs to the TiaS family.

The protein resides in the cytoplasm. The enzyme catalyses cytidine(34) in tRNA(Ile2) + agmatine + ATP + H2O = 2-agmatinylcytidine(34) in tRNA(Ile2) + AMP + 2 phosphate + 2 H(+). ATP-dependent agmatine transferase that catalyzes the formation of 2-agmatinylcytidine (agm2C) at the wobble position (C34) of tRNA(Ile2), converting the codon specificity from AUG to AUA. The chain is tRNA(Ile2) 2-agmatinylcytidine synthetase TiaS from Thermoplasma volcanium (strain ATCC 51530 / DSM 4299 / JCM 9571 / NBRC 15438 / GSS1).